The sequence spans 361 residues: DNA polymerase IV 3 (361 aa).

The region spanning 12–192 (IIHVDMDAFY…LPVNKFHGVG (181 aa)) is the UmuC domain. Mg(2+)-binding residues include Asp16 and Asp110. The active site involves Glu111.

The protein belongs to the DNA polymerase type-Y family. As to quaternary structure, monomer. Mg(2+) serves as cofactor.

It is found in the cytoplasm. The catalysed reaction is DNA(n) + a 2'-deoxyribonucleoside 5'-triphosphate = DNA(n+1) + diphosphate. Functionally, poorly processive, error-prone DNA polymerase involved in untargeted mutagenesis. Copies undamaged DNA at stalled replication forks, which arise in vivo from mismatched or misaligned primer ends. These misaligned primers can be extended by PolIV. Exhibits no 3'-5' exonuclease (proofreading) activity. May be involved in translesional synthesis, in conjunction with the beta clamp from PolIII. The polypeptide is DNA polymerase IV 3 (dinB3) (Mesorhizobium japonicum (strain LMG 29417 / CECT 9101 / MAFF 303099) (Mesorhizobium loti (strain MAFF 303099))).